A 603-amino-acid polypeptide reads, in one-letter code: Elongation factor 4 (603 aa).

One can recognise a tr-type G domain in the interval 7–191; the sequence is DNIRNFSIVA…AIVTRLPPPK (185 aa). GTP-binding positions include 19 to 24 and 138 to 141; these read DHGKST and NKVD.

Belongs to the TRAFAC class translation factor GTPase superfamily. Classic translation factor GTPase family. LepA subfamily.

The protein resides in the cell inner membrane. The enzyme catalyses GTP + H2O = GDP + phosphate + H(+). Functionally, required for accurate and efficient protein synthesis under certain stress conditions. May act as a fidelity factor of the translation reaction, by catalyzing a one-codon backward translocation of tRNAs on improperly translocated ribosomes. Back-translocation proceeds from a post-translocation (POST) complex to a pre-translocation (PRE) complex, thus giving elongation factor G a second chance to translocate the tRNAs correctly. Binds to ribosomes in a GTP-dependent manner. The polypeptide is Elongation factor 4 (Rhodopseudomonas palustris (strain BisA53)).